The chain runs to 127 residues: Small ribosomal subunit protein uS11 (127 aa).

The protein belongs to the universal ribosomal protein uS11 family. As to quaternary structure, part of the 30S ribosomal subunit. Interacts with proteins S7 and S18. Binds to IF-3.

In terms of biological role, located on the platform of the 30S subunit, it bridges several disparate RNA helices of the 16S rRNA. Forms part of the Shine-Dalgarno cleft in the 70S ribosome. In Prosthecochloris aestuarii (strain DSM 271 / SK 413), this protein is Small ribosomal subunit protein uS11.